We begin with the raw amino-acid sequence, 398 residues long: Acetate kinase 1 (398 aa).

Position 9 (asparagine 9) interacts with Mg(2+). Lysine 16 is an ATP binding site. Arginine 89 contacts substrate. The active-site Proton donor/acceptor is the aspartate 146. Residues 206–210 (HLGNG), 281–283 (DCR), and 329–333 (GIGEN) contribute to the ATP site. Mg(2+) is bound at residue glutamate 384.

Belongs to the acetokinase family. Homodimer. Requires Mg(2+) as cofactor. Mn(2+) serves as cofactor.

The protein localises to the cytoplasm. The enzyme catalyses acetate + ATP = acetyl phosphate + ADP. It functions in the pathway metabolic intermediate biosynthesis; acetyl-CoA biosynthesis; acetyl-CoA from acetate: step 1/2. Its function is as follows. Catalyzes the formation of acetyl phosphate from acetate and ATP. Can also catalyze the reverse reaction. This is Acetate kinase 1 from Vibrio parahaemolyticus serotype O3:K6 (strain RIMD 2210633).